A 193-amino-acid chain; its full sequence is Leucyl/phenylalanyl-tRNA--protein transferase (193 aa).

It belongs to the L/F-transferase family.

The protein resides in the cytoplasm. It carries out the reaction N-terminal L-lysyl-[protein] + L-leucyl-tRNA(Leu) = N-terminal L-leucyl-L-lysyl-[protein] + tRNA(Leu) + H(+). It catalyses the reaction N-terminal L-arginyl-[protein] + L-leucyl-tRNA(Leu) = N-terminal L-leucyl-L-arginyl-[protein] + tRNA(Leu) + H(+). The enzyme catalyses L-phenylalanyl-tRNA(Phe) + an N-terminal L-alpha-aminoacyl-[protein] = an N-terminal L-phenylalanyl-L-alpha-aminoacyl-[protein] + tRNA(Phe). Its function is as follows. Functions in the N-end rule pathway of protein degradation where it conjugates Leu, Phe and, less efficiently, Met from aminoacyl-tRNAs to the N-termini of proteins containing an N-terminal arginine or lysine. The chain is Leucyl/phenylalanyl-tRNA--protein transferase from Gloeobacter violaceus (strain ATCC 29082 / PCC 7421).